A 740-amino-acid chain; its full sequence is Homeobox protein 4 (740 aa).

A compositionally biased stretch (polar residues) spans 1–13; it reads MNTVEENNTKITD. Disordered stretches follow at residues 1 to 41 and 179 to 491; these read MNTV…ENLS and NNNN…NNEI. Low complexity-rich tracts occupy residues 14–34, 179–241, 251–288, and 303–316; these read NNNN…NNKN, NNNN…PQQN, NNNN…NNNN, and STTD…SVPS. Positions 254–287 form a coiled coil; it reads NINNNNINKNNNNYNNNNNNKNNNNNNNNNNNNN. Basic residues predominate over residues 317-328; the sequence is NKKKSSKTKQKS. The span at 339-363 shows a compositional bias: polar residues; sequence HKSNYHQQPNQNSQHLQSKPNSPIL. 2 stretches are compositionally biased toward low complexity: residues 365 to 390 and 397 to 491; these read SSPL…SPPQ and NNNF…NNEI. Residues 472 to 500 are a coiled coil; sequence NTNTNNNNNKNNNNNNNNEIENNNNEELI. A DNA-binding region (homeobox) is located at residues 605–667; the sequence is RPKKGAKLSK…NTRRRKVPTL (63 aa). A compositionally biased stretch (low complexity) spans 686-722; sequence NNNNNNGGNSNFKNNNNNTITTTSTSNNNNNNNNNNH. Residues 686-740 are disordered; the sequence is NNNNNNGGNSNFKNNNNNTITTTSTSNNNNNNNNNNHNEMECDDGENEESSEYDD. The span at 726–740 shows a compositional bias: acidic residues; it reads ECDDGENEESSEYDD.

It localises to the nucleus. Functionally, putative transcription factor. This chain is Homeobox protein 4 (hbx4), found in Dictyostelium discoideum (Social amoeba).